A 317-amino-acid polypeptide reads, in one-letter code: Melanocyte-stimulating hormone receptor (317 aa).

Over 1–37 (MPMQGAQRRLLGSLNSTPTATPNLGLAANHTGAPCLE) the chain is Extracellular. N29 is a glycosylation site (N-linked (GlcNAc...) asparagine). The helical transmembrane segment at 38-63 (VSIPHGLFLSLGLVSLVENVLVVAAI) threads the bilayer. At 64 to 72 (AKNRNLHSP) the chain is on the cytoplasmic side. Residues 73 to 93 (MYCFICCLALSDLLVSGSNML) form a helical membrane-spanning segment. The Extracellular portion of the chain corresponds to 94-118 (ETAVILLLEAGALATRASVVQQLQN). Residues 119–140 (TIDVLTCSSMLCSLCFLGAIAV) traverse the membrane as a helical segment. Residues 141 to 163 (DRYVSIFYALRYHSIVTLPRARR) lie on the Cytoplasmic side of the membrane. A helical membrane pass occupies residues 164 to 183 (AIAAIWVASVLSSTLFIAYC). The Extracellular portion of the chain corresponds to 184–191 (DHAAVLLC). Residues 192–211 (LVVFFLAMLVLMAVLYVHML) traverse the membrane as a helical segment. Over 212 to 240 (ARACQHAQGITRLHKRQLPAHQGFGLRGA) the chain is Cytoplasmic. A helical membrane pass occupies residues 241 to 266 (ATLTILLGIFFLCWGPFFLHLMLVVL). Residues 267-279 (CPQHLTCSCIFKN) lie on the Extracellular side of the membrane. The chain crosses the membrane as a helical span at residues 280-300 (FKVFLTLIICNTIIDPLIYAF). Over 301 to 317 (RSQELCRTLKEVLLCSW) the chain is Cytoplasmic. Residue C315 is the site of S-palmitoyl cysteine attachment.

It belongs to the G-protein coupled receptor 1 family. Interacts with MGRN1, but does not undergo MGRN1-mediated ubiquitination; this interaction competes with GNAS-binding and thus inhibits agonist-induced cAMP production. Interacts with OPN3; the interaction results in a decrease in MC1R-mediated cAMP signaling and ultimately a decrease in melanin production in melanocytes.

It is found in the cell membrane. Receptor for MSH (alpha, beta and gamma) and ACTH. The activity of this receptor is mediated by G proteins which activate adenylate cyclase. Mediates melanogenesis, the production of eumelanin (black/brown) and phaeomelanin (red/yellow), via regulation of cAMP signaling in melanocytes. This is Melanocyte-stimulating hormone receptor (MC1R) from Alouatta caraya (Black howler monkey).